We begin with the raw amino-acid sequence, 316 residues long: 4-hydroxy-3-methylbut-2-enyl diphosphate reductase (316 aa).

Cys-12 contacts [4Fe-4S] cluster. His-41 and His-74 together coordinate (2E)-4-hydroxy-3-methylbut-2-enyl diphosphate. Dimethylallyl diphosphate is bound by residues His-41 and His-74. Positions 41 and 74 each coordinate isopentenyl diphosphate. Cys-96 is a binding site for [4Fe-4S] cluster. His-124 provides a ligand contact to (2E)-4-hydroxy-3-methylbut-2-enyl diphosphate. His-124 is a binding site for dimethylallyl diphosphate. His-124 lines the isopentenyl diphosphate pocket. Glu-126 functions as the Proton donor in the catalytic mechanism. Thr-167 lines the (2E)-4-hydroxy-3-methylbut-2-enyl diphosphate pocket. Cys-197 lines the [4Fe-4S] cluster pocket. The (2E)-4-hydroxy-3-methylbut-2-enyl diphosphate site is built by Ser-225, Ser-226, Asn-227, and Ser-269. Residues Ser-225, Ser-226, Asn-227, and Ser-269 each contribute to the dimethylallyl diphosphate site. Residues Ser-225, Ser-226, Asn-227, and Ser-269 each coordinate isopentenyl diphosphate.

Belongs to the IspH family. Homodimer. The cofactor is [4Fe-4S] cluster.

It carries out the reaction isopentenyl diphosphate + 2 oxidized [2Fe-2S]-[ferredoxin] + H2O = (2E)-4-hydroxy-3-methylbut-2-enyl diphosphate + 2 reduced [2Fe-2S]-[ferredoxin] + 2 H(+). It catalyses the reaction dimethylallyl diphosphate + 2 oxidized [2Fe-2S]-[ferredoxin] + H2O = (2E)-4-hydroxy-3-methylbut-2-enyl diphosphate + 2 reduced [2Fe-2S]-[ferredoxin] + 2 H(+). The protein operates within isoprenoid biosynthesis; dimethylallyl diphosphate biosynthesis; dimethylallyl diphosphate from (2E)-4-hydroxy-3-methylbutenyl diphosphate: step 1/1. It participates in isoprenoid biosynthesis; isopentenyl diphosphate biosynthesis via DXP pathway; isopentenyl diphosphate from 1-deoxy-D-xylulose 5-phosphate: step 6/6. Functionally, catalyzes the conversion of 1-hydroxy-2-methyl-2-(E)-butenyl 4-diphosphate (HMBPP) into a mixture of isopentenyl diphosphate (IPP) and dimethylallyl diphosphate (DMAPP). Acts in the terminal step of the DOXP/MEP pathway for isoprenoid precursor biosynthesis. This Escherichia coli (strain ATCC 8739 / DSM 1576 / NBRC 3972 / NCIMB 8545 / WDCM 00012 / Crooks) protein is 4-hydroxy-3-methylbut-2-enyl diphosphate reductase.